The sequence spans 220 residues: Tumor protein D54 (220 aa).

Residue M1 is modified to N-acetylmethionine. Polar residues predominate over residues 1–14 (MDSASQDINLNSPN). Residues 1–26 (MDSASQDINLNSPNKGVLSDFMTDVP) are disordered. S3, S12, and S19 each carry phosphoserine. A coiled-coil region spans residues 40-82 (GLTEVEEEELRAELAKVEEEIVTLRQVLAAKERHCGELKRRLG). 4 positions are modified to phosphoserine: S96, S149, S168, and S175. T177 is modified (phosphothreonine). S180 is modified (phosphoserine). Position 187 is a phosphothreonine (T187). The tract at residues 189–220 (KSKVVGGRENGSDTLPSSPGSGDQTLPDHAPF) is disordered. A compositionally biased stretch (polar residues) spans 200–212 (SDTLPSSPGSGDQ). Phosphoserine is present on residues S206 and S209.

This sequence belongs to the TPD52 family. In terms of assembly, forms a homodimer or heterodimer with other members of the family. Interacts with MAL2.

The sequence is that of Tumor protein D54 (Tpd52l2) from Rattus norvegicus (Rat).